The following is a 441-amino-acid chain: Cysteine--tRNA ligase (441 aa).

Residue C24 participates in Zn(2+) binding. Positions P26 to N36 match the 'HIGH' region motif. Zn(2+) is bound by residues C204, H230, and E234. The 'KMSKS' region motif lies at K262 to S266. K265 contributes to the ATP binding site.

It belongs to the class-I aminoacyl-tRNA synthetase family. Monomer. It depends on Zn(2+) as a cofactor.

It localises to the cytoplasm. It carries out the reaction tRNA(Cys) + L-cysteine + ATP = L-cysteinyl-tRNA(Cys) + AMP + diphosphate. This is Cysteine--tRNA ligase from Mycoplasma capricolum subsp. capricolum (strain California kid / ATCC 27343 / NCTC 10154).